The chain runs to 61 residues: Beta-toxin Tce4 (61 aa).

One can recognise an LCN-type CS-alpha/beta domain in the interval 1 to 61 (KEGYLMDHEG…KVWEYATNRC (61 aa)). 4 disulfides stabilise this stretch: cysteine 11/cysteine 61, cysteine 15/cysteine 37, cysteine 23/cysteine 42, and cysteine 27/cysteine 44. Cysteine amide is present on cysteine 61.

This sequence belongs to the long (4 C-C) scorpion toxin superfamily. Sodium channel inhibitor family. Beta subfamily. As to expression, expressed by the venom gland.

It is found in the secreted. Its function is as follows. Beta toxins bind voltage-independently at site-4 of sodium channels (Nav) and shift the voltage of activation toward more negative potentials thereby affecting sodium channel activation and promoting spontaneous and repetitive firing. This Tityus cerroazul (Scorpion) protein is Beta-toxin Tce4.